The primary structure comprises 429 residues: Glutamate-1-semialdehyde 2,1-aminomutase (429 aa).

At K265 the chain carries N6-(pyridoxal phosphate)lysine.

This sequence belongs to the class-III pyridoxal-phosphate-dependent aminotransferase family. HemL subfamily. As to quaternary structure, homodimer. Pyridoxal 5'-phosphate is required as a cofactor.

Its subcellular location is the cytoplasm. The catalysed reaction is (S)-4-amino-5-oxopentanoate = 5-aminolevulinate. The protein operates within porphyrin-containing compound metabolism; protoporphyrin-IX biosynthesis; 5-aminolevulinate from L-glutamyl-tRNA(Glu): step 2/2. The sequence is that of Glutamate-1-semialdehyde 2,1-aminomutase from Shewanella pealeana (strain ATCC 700345 / ANG-SQ1).